A 413-amino-acid chain; its full sequence is Gamma-lactamase FDB1 (413 aa).

Residues histidine 126, histidine 128, aspartate 130, histidine 131, histidine 211, aspartate 235, and histidine 323 each contribute to the Zn(2+) site.

This sequence belongs to the metallo-beta-lactamase superfamily.

It functions in the pathway xenobiotic degradation. Its function is as follows. Gamma-lactamase; part of the Fusarium detoxification of benzoxazolinone cluster involved in the degradation of benzoxazolinones produced by the host plant. Maize, wheat, and rye produce the 2 benzoxazinone phytoanticipins 2,4-dihy-droxy-7-methoxy-1,4-benzoxazin-3-one (DIMBOA) and 2,4-dihydroxy-1,4-benzoxazin-3-one (DIBOA) that, due to their inherent instability once released, spontaneously degrade to the more stable corresponding benzoxazolinones, 6-methoxy-2-benzoxazolinone (MBOA) and 2-benzoxazolinone (BOA), respectively. The first step in the detoxification of benzoxazolinones involves the hydrolysis of the cyclic ester bond of benzoxazolinones by the gamma-lactamase FDB1 to aminophenols. FDB1 is able to convert BOA into 2-aminophenol (2-AP), as well as MBOA into 5-methoxy-2-aminophenol (2-AMP). The N-malonyltransferase FDB2 then metabolizes aminophenols via N-malonylation to non-toxic malonamic acids. FDB2 converts 2-AP into N-(2-hydroxyphenyl) malonamic acid (HPMA) and 2-AMP into N-(2-hydroxy-4-methoxyphenyl) malonamic acid (HMPMA). The cluster also contains 2 transcription factors (FDB3 and FPSE_08121), an aldo-keto reductase (FPSE_08125) that possibly associates with a ketone component of BOA and MBOA degradation, an esterase (FPSE_08126), an acyl-CoA transferase (FPSE_08120), a solute carrier protein (FPSE_08119) and a transmembrane transporter (FPSE_08127) proposed to shuttle metabolites of benzoxazolinone degradation. The sequence is that of Gamma-lactamase FDB1 from Fusarium pseudograminearum (strain CS3096) (Wheat and barley crown-rot fungus).